A 516-amino-acid polypeptide reads, in one-letter code: MAQSSRICHGVQNPCVIISNLSKSNQNKSPFSVSLKTHQPRASSWGLKKSGTMLNGSVIRPVKVTASVSTSEKASEIVLQPIREISGLIKLPGSKSLSNRILLLAALSEGTTVVDNLLNSDDINYMLDALKKLGLNVERDSVNNRAVVEGCGGIFPASLDSKSDIELYLGNAGTAMRPLTAAVTAAGGNASYVLDGVPRMRERPIGDLVVGLKQLGADVECTLGTNCPPVRVNANGGLPGGKVKLSGSISSQYLTALLMAAPLALGDVEIEIIDKLISVPYVEMTLKLMERFGVSAEHSDSWDRFFVKGGQKYKSPGNAYVEGDASSASYFLAGAAITGETVTVEGCGTTSLQGDVKFAEVLEKMGCKVSWTENSVTVTGPSRDAFGMRHLRAVDVNMNKMPDVAMTLAVVALFADGPTTIRDVASWRVKETERMIAICTELRKLGATVEEGSDYCVITPPAKVKPAEIDTYDDHRMAMAFSLAACADVPVTIKDPGCTRKTFPDYFQVLESITKH.

The transit peptide at 1–72 (MAQSSRICHG…KVTASVSTSE (72 aa)) directs the protein to the chloroplast. 3 residues coordinate 3-phosphoshikimate: lysine 95, serine 96, and arginine 100. Lysine 95 contacts phosphoenolpyruvate. The phosphoenolpyruvate site is built by glycine 173 and arginine 203. 6 residues coordinate 3-phosphoshikimate: serine 250, serine 251, glutamine 252, serine 278, aspartate 403, and lysine 430. Glutamine 252 provides a ligand contact to phosphoenolpyruvate. Residue aspartate 403 is the Proton acceptor of the active site. Residues arginine 434, arginine 476, and lysine 501 each contribute to the phosphoenolpyruvate site.

The protein belongs to the EPSP synthase family.

The protein resides in the plastid. It localises to the chloroplast. It carries out the reaction 3-phosphoshikimate + phosphoenolpyruvate = 5-O-(1-carboxyvinyl)-3-phosphoshikimate + phosphate. It functions in the pathway metabolic intermediate biosynthesis; chorismate biosynthesis; chorismate from D-erythrose 4-phosphate and phosphoenolpyruvate: step 6/7. Its function is as follows. Catalyzes the transfer of the enolpyruvyl moiety of phosphoenolpyruvate (PEP) to the 5-hydroxyl of shikimate-3-phosphate (S3P) to produce enolpyruvyl shikimate-3-phosphate and inorganic phosphate. This Brassica napus (Rape) protein is 3-phosphoshikimate 1-carboxyvinyltransferase, chloroplastic.